The primary structure comprises 227 residues: Cytochrome c oxidase subunit 2 (227 aa).

Residues Met-1–His-26 lie on the Mitochondrial intermembrane side of the membrane. Residues Thr-27–Thr-48 form a helical membrane-spanning segment. Residues Lys-49–Glu-62 lie on the Mitochondrial matrix side of the membrane. A helical transmembrane segment spans residues Thr-63–Arg-82. At Leu-83 to Met-227 the chain is on the mitochondrial intermembrane side. His-161, Cys-196, Glu-198, Cys-200, His-204, and Met-207 together coordinate Cu cation. Glu-198 is a Mg(2+) binding site.

It belongs to the cytochrome c oxidase subunit 2 family. In terms of assembly, component of the cytochrome c oxidase (complex IV, CIV), a multisubunit enzyme composed of a catalytic core of 3 subunits and several supernumerary subunits. The complex exists as a monomer or a dimer and forms supercomplexes (SCs) in the inner mitochondrial membrane with ubiquinol-cytochrome c oxidoreductase (cytochrome b-c1 complex, complex III, CIII). Cu cation serves as cofactor.

The protein resides in the mitochondrion inner membrane. It catalyses the reaction 4 Fe(II)-[cytochrome c] + O2 + 8 H(+)(in) = 4 Fe(III)-[cytochrome c] + 2 H2O + 4 H(+)(out). Its function is as follows. Component of the cytochrome c oxidase, the last enzyme in the mitochondrial electron transport chain which drives oxidative phosphorylation. The respiratory chain contains 3 multisubunit complexes succinate dehydrogenase (complex II, CII), ubiquinol-cytochrome c oxidoreductase (cytochrome b-c1 complex, complex III, CIII) and cytochrome c oxidase (complex IV, CIV), that cooperate to transfer electrons derived from NADH and succinate to molecular oxygen, creating an electrochemical gradient over the inner membrane that drives transmembrane transport and the ATP synthase. Cytochrome c oxidase is the component of the respiratory chain that catalyzes the reduction of oxygen to water. Electrons originating from reduced cytochrome c in the intermembrane space (IMS) are transferred via the dinuclear copper A center (CU(A)) of subunit 2 and heme A of subunit 1 to the active site in subunit 1, a binuclear center (BNC) formed by heme A3 and copper B (CU(B)). The BNC reduces molecular oxygen to 2 water molecules using 4 electrons from cytochrome c in the IMS and 4 protons from the mitochondrial matrix. The protein is Cytochrome c oxidase subunit 2 (COII) of Locusta migratoria (Migratory locust).